A 370-amino-acid chain; its full sequence is METQKKIHVGMLFGGNSSEHDVSKRSAHNIYDAMDKNKYEIDLFLITKNGIVLSDAATRRVFDGEPEDQVVAEEMPKLDMSDPLAPIKNLTLAKDIDIFYPVVHGNLGEDGTLQGLFKLLKKPYVGSGVLASAASFDKDITKQILTHHHIQNTKYVVVTPENRDQMTYAYLQAHVGDHLFIKPANQGSSIGIHKAENEQEYLDGLADAFKYDYKILVEESIDNPREVECSILGNENPKASKLGAIDVPKTDTFYDYNNKFVDASGVTFELPVELPADLTKRIQQMSLDAFKALGLKGMARVDFLVSEDGEPYLGEINTLPGFTNISLYPKLWEVSGISYTALIDQLIQLGFDEFKRQSDIHYDFVALDAE.

One can recognise an ATP-grasp domain in the interval 142 to 348 (KQILTHHHIQ…YTALIDQLIQ (207 aa)). Residue 172-227 (QAHVGDHLFIKPANQGSSIGIHKAENEQEYLDGLADAFKYDYKILVEESIDNPREV) coordinates ATP. Aspartate 302, glutamate 315, and asparagine 317 together coordinate Mg(2+).

This sequence belongs to the D-alanine--D-alanine ligase family. Mg(2+) serves as cofactor. Requires Mn(2+) as cofactor.

It localises to the cytoplasm. The catalysed reaction is 2 D-alanine + ATP = D-alanyl-D-alanine + ADP + phosphate + H(+). Its pathway is cell wall biogenesis; peptidoglycan biosynthesis. Cell wall formation. In Lactiplantibacillus plantarum (strain ATCC BAA-793 / NCIMB 8826 / WCFS1) (Lactobacillus plantarum), this protein is D-alanine--D-alanine ligase.